The primary structure comprises 518 residues: Protein nucleotidyltransferase YdiU (518 aa).

G100, G102, R103, K123, D135, G136, R193, and R200 together coordinate ATP. D270 serves as the catalytic Proton acceptor. 2 residues coordinate Mg(2+): N271 and D280. D280 contacts ATP.

It belongs to the SELO family. Mg(2+) is required as a cofactor. Requires Mn(2+) as cofactor.

It carries out the reaction L-seryl-[protein] + ATP = 3-O-(5'-adenylyl)-L-seryl-[protein] + diphosphate. It catalyses the reaction L-threonyl-[protein] + ATP = 3-O-(5'-adenylyl)-L-threonyl-[protein] + diphosphate. The catalysed reaction is L-tyrosyl-[protein] + ATP = O-(5'-adenylyl)-L-tyrosyl-[protein] + diphosphate. The enzyme catalyses L-histidyl-[protein] + UTP = N(tele)-(5'-uridylyl)-L-histidyl-[protein] + diphosphate. It carries out the reaction L-seryl-[protein] + UTP = O-(5'-uridylyl)-L-seryl-[protein] + diphosphate. It catalyses the reaction L-tyrosyl-[protein] + UTP = O-(5'-uridylyl)-L-tyrosyl-[protein] + diphosphate. Functionally, nucleotidyltransferase involved in the post-translational modification of proteins. It can catalyze the addition of adenosine monophosphate (AMP) or uridine monophosphate (UMP) to a protein, resulting in modifications known as AMPylation and UMPylation. This chain is Protein nucleotidyltransferase YdiU, found in Xanthomonas oryzae pv. oryzae (strain PXO99A).